A 679-amino-acid polypeptide reads, in one-letter code: UvrABC system protein B (679 aa).

A Helicase ATP-binding domain is found at tyrosine 25–valine 176. ATP is bound at residue glycine 38–threonine 45. Positions tyrosine 91–valine 114 match the Beta-hairpin motif. Residues glutamine 429–proline 591 form the Helicase C-terminal domain. One can recognise a UVR domain in the interval proline 639–lysine 674.

The protein belongs to the UvrB family. In terms of assembly, forms a heterotetramer with UvrA during the search for lesions. Interacts with UvrC in an incision complex.

The protein localises to the cytoplasm. In terms of biological role, the UvrABC repair system catalyzes the recognition and processing of DNA lesions. A damage recognition complex composed of 2 UvrA and 2 UvrB subunits scans DNA for abnormalities. Upon binding of the UvrA(2)B(2) complex to a putative damaged site, the DNA wraps around one UvrB monomer. DNA wrap is dependent on ATP binding by UvrB and probably causes local melting of the DNA helix, facilitating insertion of UvrB beta-hairpin between the DNA strands. Then UvrB probes one DNA strand for the presence of a lesion. If a lesion is found the UvrA subunits dissociate and the UvrB-DNA preincision complex is formed. This complex is subsequently bound by UvrC and the second UvrB is released. If no lesion is found, the DNA wraps around the other UvrB subunit that will check the other stand for damage. The polypeptide is UvrABC system protein B (Prochlorococcus marinus (strain MIT 9211)).